A 432-amino-acid chain; its full sequence is DEAD-box ATP-dependent RNA helicase 56 (432 aa).

Residues 1–28 (MAEAEVKDNEVYEEDLVDYEEEVENGTD) are a coiled coil. A Q motif motif is present at residues 51–79 (SGFRDFLLKPELLRAIQDCGFEHPSEVQH). In terms of domain architecture, Helicase ATP-binding spans 82–255 (IPQAILGMDV…KKFMQDPMEI (174 aa)). 95 to 102 (AKSGMGKT) serves as a coordination point for ATP. The DEAD box motif lies at 202–205 (DECD). Positions 283–428 (KLNDLLDALD…ELPEQIDTST (146 aa)) constitute a Helicase C-terminal domain.

Belongs to the DEAD box helicase family. DECD subfamily. As to quaternary structure, homodimer and heterodimer with AIP2. Interacts with API5.

Its subcellular location is the nucleus. The enzyme catalyses ATP + H2O = ADP + phosphate + H(+). ATP-binding RNA helicase involved in pre-mRNA splicing. Required for the export of mRNA out of the nucleus. Required for tapetal programmed cell death (PCD) and degeneration during anther development. Forms dimer with AIP2 and binds the promoter region of the cysteine protease CP1. Can complement the yeast RNA helicase SUB2. Plants silencing AIP1 and AIP2 are male sterile. This chain is DEAD-box ATP-dependent RNA helicase 56, found in Oryza sativa subsp. japonica (Rice).